We begin with the raw amino-acid sequence, 166 residues long: Small ribosomal subunit protein cS23z (166 aa).

This sequence belongs to the chloroplast-specific ribosomal protein cS23 family. As to quaternary structure, part of the 30S ribosomal subunit.

The protein localises to the plastid. It is found in the chloroplast. Functionally, component of the chloroplast ribosome (chloro-ribosome), a dedicated translation machinery responsible for the synthesis of chloroplast genome-encoded proteins, including proteins of the transcription and translation machinery and components of the photosynthetic apparatus. This Arabidopsis thaliana (Mouse-ear cress) protein is Small ribosomal subunit protein cS23z.